A 219-amino-acid chain; its full sequence is Ribose-5-phosphate isomerase A (219 aa).

Residues 29–32 (TGST), 82–85 (DGAD), and 95–98 (KGGG) contribute to the substrate site. Glu104 (proton acceptor) is an active-site residue. A substrate-binding site is contributed by Lys122.

This sequence belongs to the ribose 5-phosphate isomerase family. Homodimer.

It catalyses the reaction aldehydo-D-ribose 5-phosphate = D-ribulose 5-phosphate. Its pathway is carbohydrate degradation; pentose phosphate pathway; D-ribose 5-phosphate from D-ribulose 5-phosphate (non-oxidative stage): step 1/1. In terms of biological role, catalyzes the reversible conversion of ribose-5-phosphate to ribulose 5-phosphate. The sequence is that of Ribose-5-phosphate isomerase A from Chromobacterium violaceum (strain ATCC 12472 / DSM 30191 / JCM 1249 / CCUG 213 / NBRC 12614 / NCIMB 9131 / NCTC 9757 / MK).